We begin with the raw amino-acid sequence, 187 residues long: GTP cyclohydrolase 1 (187 aa).

Cysteine 76, histidine 79, and cysteine 148 together coordinate Zn(2+).

The protein belongs to the GTP cyclohydrolase I family. As to quaternary structure, toroid-shaped homodecamer, composed of two pentamers of five dimers.

It carries out the reaction GTP + H2O = 7,8-dihydroneopterin 3'-triphosphate + formate + H(+). The protein operates within cofactor biosynthesis; 7,8-dihydroneopterin triphosphate biosynthesis; 7,8-dihydroneopterin triphosphate from GTP: step 1/1. The polypeptide is GTP cyclohydrolase 1 (Streptococcus suis (strain 98HAH33)).